A 637-amino-acid polypeptide reads, in one-letter code: Chaperone protein HtpG (637 aa).

Positions 1-330 (MATAPASHAF…TEDLPLNISR (330 aa)) are a; substrate-binding. The interval 331–551 (ETLQENVVVR…GGASTSSMDR (221 aa)) is b. A c region spans residues 552–637 (LLRVLHKDES…GDWYKAVRGL (86 aa)).

Belongs to the heat shock protein 90 family. Homodimer.

It localises to the cytoplasm. In terms of biological role, molecular chaperone. Has ATPase activity. The protein is Chaperone protein HtpG of Nitratidesulfovibrio vulgaris (strain ATCC 29579 / DSM 644 / CCUG 34227 / NCIMB 8303 / VKM B-1760 / Hildenborough) (Desulfovibrio vulgaris).